A 240-amino-acid chain; its full sequence is NADH-quinone oxidoreductase subunit I 2 (240 aa).

4Fe-4S ferredoxin-type domains follow at residues 57 to 86 (TDLR…IEWH) and 97 to 126 (DRFA…MGYD). [4Fe-4S] cluster is bound by residues Cys66, Cys69, Cys72, Cys76, Cys106, Cys109, Cys112, and Cys116. The tract at residues 185–240 (IHGYLGRPPLPKGYEPELKPQFRKPAEEAAEAQQAEAAGQPAAEPGKTNGEEAGQP) is disordered. Basic and acidic residues predominate over residues 198 to 211 (YEPELKPQFRKPAE). Low complexity predominate over residues 215–230 (EAQQAEAAGQPAAEPG).

The protein belongs to the complex I 23 kDa subunit family. In terms of assembly, NDH-1 is composed of 14 different subunits. Subunits NuoA, H, J, K, L, M, N constitute the membrane sector of the complex. [4Fe-4S] cluster is required as a cofactor.

It is found in the cell membrane. It catalyses the reaction a quinone + NADH + 5 H(+)(in) = a quinol + NAD(+) + 4 H(+)(out). NDH-1 shuttles electrons from NADH, via FMN and iron-sulfur (Fe-S) centers, to quinones in the respiratory chain. The immediate electron acceptor for the enzyme in this species is believed to be ubiquinone. Couples the redox reaction to proton translocation (for every two electrons transferred, four hydrogen ions are translocated across the cytoplasmic membrane), and thus conserves the redox energy in a proton gradient. In Symbiobacterium thermophilum (strain DSM 24528 / JCM 14929 / IAM 14863 / T), this protein is NADH-quinone oxidoreductase subunit I 2.